The primary structure comprises 405 residues: L-rhamnonate dehydratase (405 aa).

Residues histidine 33 and arginine 59 each contribute to the substrate site. Residues aspartate 226, glutamate 252, and glutamate 280 each coordinate Mg(2+). Residue histidine 329 is the Proton acceptor of the active site. Residue glutamate 349 coordinates substrate.

It belongs to the mandelate racemase/muconate lactonizing enzyme family. RhamD subfamily. In terms of assembly, homooctamer; tetramer of dimers. The cofactor is Mg(2+).

The catalysed reaction is L-rhamnonate = 2-dehydro-3-deoxy-L-rhamnonate + H2O. Its function is as follows. Catalyzes the dehydration of L-rhamnonate to 2-keto-3-deoxy-L-rhamnonate (KDR). This is L-rhamnonate dehydratase from Escherichia coli O81 (strain ED1a).